A 63-amino-acid polypeptide reads, in one-letter code: Sperm protamine P1 (63 aa).

The interval 1 to 63 (MARYRRHSRS…RYSRRGRRRY (63 aa)) is disordered.

The protein belongs to the protamine P1 family. As to expression, testis.

The protein localises to the nucleus. It localises to the chromosome. Its function is as follows. Protamines substitute for histones in the chromatin of sperm during the haploid phase of spermatogenesis. They compact sperm DNA into a highly condensed, stable and inactive complex. In Pseudantechinus macdonnellensis (Fat-tailed marsupial mouse), this protein is Sperm protamine P1 (PRM1).